Consider the following 262-residue polypeptide: Global transcriptional regulator CodY (262 aa).

Positions methionine 1–leucine 159 are GAF domain. The segment at residues alanine 207–arginine 226 is a DNA-binding region (H-T-H motif).

This sequence belongs to the CodY family.

It is found in the cytoplasm. DNA-binding global transcriptional regulator which is involved in the adaptive response to starvation and acts by directly or indirectly controlling the expression of numerous genes in response to nutrient availability. During rapid exponential growth, CodY is highly active and represses genes whose products allow adaptation to nutrient depletion. The polypeptide is Global transcriptional regulator CodY (Streptococcus pneumoniae (strain JJA)).